The sequence spans 309 residues: Coproporphyrin III ferrochelatase (309 aa).

Fe-coproporphyrin III contacts are provided by residues Tyr-12, Thr-14, Arg-29, 45 to 46 (RY), Ser-53, and Tyr-124. Fe(2+) is bound by residues His-182 and Glu-263.

The protein belongs to the ferrochelatase family. Monomer.

The protein resides in the cytoplasm. The enzyme catalyses Fe-coproporphyrin III + 2 H(+) = coproporphyrin III + Fe(2+). Its pathway is porphyrin-containing compound metabolism; protoheme biosynthesis. Functionally, involved in coproporphyrin-dependent heme b biosynthesis. Catalyzes the insertion of ferrous iron into coproporphyrin III to form Fe-coproporphyrin III. In Listeria monocytogenes serovar 1/2a (strain ATCC BAA-679 / EGD-e), this protein is Coproporphyrin III ferrochelatase.